A 250-amino-acid chain; its full sequence is Non-specific acid phosphatase (250 aa).

Residues 1–20 (MKSRYLLFFLPLIVAKYTSA) form the signal peptide.

This sequence belongs to the class A bacterial acid phosphatase family. As to quaternary structure, homodimer.

It is found in the periplasm. The enzyme catalyses a phosphate monoester + H2O = an alcohol + phosphate. This Salmonella typhi protein is Non-specific acid phosphatase (phoN).